The following is a 1101-amino-acid chain: Rho guanine nucleotide exchange factor gef2 (1101 aa).

Residues 203 to 222 (EDSRKKTSSPSPSFASSKDA) are disordered. The span at 210 to 219 (SSPSPSFASS) shows a compositional bias: low complexity. Positions 230 to 428 (KKKSLLIEMM…KNIAEMPTVD (199 aa)) constitute a DH domain. Residues S736 and S977 each carry the phosphoserine modification.

Its subcellular location is the cytoplasm. It is found in the cytoskeleton. The protein resides in the microtubule organizing center. The protein localises to the spindle pole body. Has a role in the control of cell polarity and cytokinesis. Involved in bipolar growth and septum formation. The chain is Rho guanine nucleotide exchange factor gef2 (gef2) from Schizosaccharomyces pombe (strain 972 / ATCC 24843) (Fission yeast).